The primary structure comprises 334 residues: MTAPMQDRYGRPLRDLRLSVIEACNFRCGYCMPADRVPDDYGFDSQQRLSFDQLETLVRAFVSVGVTKVRLTGGEPLLRRDLPSLIARLTAIEGIEDLALTTNGTLLARQAVALRQAGLRRITVSMDALEPALFRRMSGDRGEIAQVLTGIAAAEQAGFQRLKINCVVQRGVNEDQVLPLVEHFRGTGHVLRFIEFMDVGSCNGWTPDAVVTSAQLHERIHARWPLVALDANYTGEVAQRHAFADGAGEVGFVSSVSVPFCGDCQRARVSADGHLYTCLFASQGHDLKPALANGEPALATHLRQRWSVRGDRYSEVRASVPRRGKPVEMFLIGG.

Residues 8–244 enclose the Radical SAM core domain; it reads RYGRPLRDLR…GEVAQRHAFA (237 aa). Arg17 contacts GTP. Cys24 and Cys28 together coordinate [4Fe-4S] cluster. Tyr30 serves as a coordination point for S-adenosyl-L-methionine. Cys31 is a binding site for [4Fe-4S] cluster. Arg70 provides a ligand contact to GTP. Gly74 lines the S-adenosyl-L-methionine pocket. Thr101 provides a ligand contact to GTP. An S-adenosyl-L-methionine-binding site is contributed by Ser125. A GTP-binding site is contributed by Lys163. Position 197 (Met197) interacts with S-adenosyl-L-methionine. Cys261 and Cys264 together coordinate [4Fe-4S] cluster. 266–268 lines the GTP pocket; the sequence is RAR. Cys278 is a [4Fe-4S] cluster binding site.

Belongs to the radical SAM superfamily. MoaA family. In terms of assembly, monomer and homodimer. [4Fe-4S] cluster serves as cofactor.

The enzyme catalyses GTP + AH2 + S-adenosyl-L-methionine = (8S)-3',8-cyclo-7,8-dihydroguanosine 5'-triphosphate + 5'-deoxyadenosine + L-methionine + A + H(+). Its pathway is cofactor biosynthesis; molybdopterin biosynthesis. In terms of biological role, catalyzes the cyclization of GTP to (8S)-3',8-cyclo-7,8-dihydroguanosine 5'-triphosphate. This Xanthomonas axonopodis pv. citri (strain 306) protein is GTP 3',8-cyclase.